Reading from the N-terminus, the 60-residue chain is Large ribosomal subunit protein bL32 (60 aa).

Residues Met1 to His19 show a composition bias toward basic residues. The segment at Met1–Pro24 is disordered.

It belongs to the bacterial ribosomal protein bL32 family.

The polypeptide is Large ribosomal subunit protein bL32 (Wolbachia pipientis wMel).